The sequence spans 308 residues: MDKHIPVLLKESIEYLNIKPDGIYVDCTLGRAGHSSEILKKLNQKGFLYAIDQDQIAIDQAKEKLEQINNNFLLIQGNFSNLSALLAINHVFNVDGILYDLGVSSPQIDIASRGFSYKMDGPLDMRMDLNSTLTAHQVINTYSESQISEILFKYGEESFSKSISKKIVESRPINSTLELVEIIKSALPQKVLKQKKHPAKKTFQALRIYINNELIALENSLKQALDLLNSKARICVITFHSLEEKIVKNIFNNSTNYYQEQLLSNLPIKADLNSKFKLVIKKPIKPSLLELEQNHRSHSAKLWVIEKN.

S-adenosyl-L-methionine contacts are provided by residues 32–34, Asp52, Phe79, Asp100, and Gln107; that span reads AGH.

Belongs to the methyltransferase superfamily. RsmH family.

The protein localises to the cytoplasm. It carries out the reaction cytidine(1402) in 16S rRNA + S-adenosyl-L-methionine = N(4)-methylcytidine(1402) in 16S rRNA + S-adenosyl-L-homocysteine + H(+). Specifically methylates the N4 position of cytidine in position 1402 (C1402) of 16S rRNA. The chain is Ribosomal RNA small subunit methyltransferase H from Mycoplasma mycoides subsp. mycoides SC (strain CCUG 32753 / NCTC 10114 / PG1).